The sequence spans 86 residues: Neuropeptide-like 3 (86 aa).

An N-terminal signal peptide occupies residues 1–16; the sequence is MFKLCVFVALLSLAAA. 2 propeptides span residues 17–50 and 63–75; these read APAP…VAPQ and AITQ…LLIK. Isoleucine amide is present on I85.

Its subcellular location is the secreted. This chain is Neuropeptide-like 3 (Nplp3), found in Drosophila yakuba (Fruit fly).